Here is a 151-residue protein sequence, read N- to C-terminus: Transcriptional repressor NrdR (151 aa).

A zinc finger lies at Cys-3–Cys-34. One can recognise an ATP-cone domain in the interval Leu-49–Thr-139.

Belongs to the NrdR family. Zn(2+) serves as cofactor.

Its function is as follows. Negatively regulates transcription of bacterial ribonucleotide reductase nrd genes and operons by binding to NrdR-boxes. This chain is Transcriptional repressor NrdR, found in Clostridium kluyveri (strain NBRC 12016).